The primary structure comprises 150 residues: SsrA-binding protein (150 aa).

It belongs to the SmpB family.

The protein localises to the cytoplasm. Functionally, required for rescue of stalled ribosomes mediated by trans-translation. Binds to transfer-messenger RNA (tmRNA), required for stable association of tmRNA with ribosomes. tmRNA and SmpB together mimic tRNA shape, replacing the anticodon stem-loop with SmpB. tmRNA is encoded by the ssrA gene; the 2 termini fold to resemble tRNA(Ala) and it encodes a 'tag peptide', a short internal open reading frame. During trans-translation Ala-aminoacylated tmRNA acts like a tRNA, entering the A-site of stalled ribosomes, displacing the stalled mRNA. The ribosome then switches to translate the ORF on the tmRNA; the nascent peptide is terminated with the 'tag peptide' encoded by the tmRNA and targeted for degradation. The ribosome is freed to recommence translation, which seems to be the essential function of trans-translation. This is SsrA-binding protein from Chlamydia caviae (strain ATCC VR-813 / DSM 19441 / 03DC25 / GPIC) (Chlamydophila caviae).